Consider the following 161-residue polypeptide: RNA pyrophosphohydrolase (161 aa).

The Nudix hydrolase domain maps to 7–149 (KYRPCVGIML…KKEVYKTVIE (143 aa)). The short motif at 40–61 (GGIDDGEKLEQAALRELLEEVG) is the Nudix box element.

Belongs to the Nudix hydrolase family. RppH subfamily. The cofactor is a divalent metal cation.

Functionally, accelerates the degradation of transcripts by removing pyrophosphate from the 5'-end of triphosphorylated RNA, leading to a more labile monophosphorylated state that can stimulate subsequent ribonuclease cleavage. The polypeptide is RNA pyrophosphohydrolase (Wolbachia sp. subsp. Brugia malayi (strain TRS)).